The chain runs to 602 residues: ATP-dependent lipid A-core flippase (602 aa).

5 consecutive transmembrane segments (helical) span residues 28–48, 84–104, 158–178, 180–200, and 268–288; these read VGIF…QPML, LLII…NYFL, IKVV…LLWM, WHLT…VSIA, and PMLQ…VLFL. Residues 32–323 enclose the ABC transmembrane type-1 domain; sequence LLSIVGFVIF…LSEVSSTIQK (292 aa). One can recognise an ABC transporter domain in the interval 355-591; sequence LEVRNLSFTY…NGHYARLHAM (237 aa). Residue 389–396 participates in ATP binding; it reads GRSGSGKS.

It belongs to the ABC transporter superfamily. Lipid exporter (TC 3.A.1.106) family. As to quaternary structure, homodimer.

Its subcellular location is the cell inner membrane. The catalysed reaction is ATP + H2O + lipid A-core oligosaccharideSide 1 = ADP + phosphate + lipid A-core oligosaccharideSide 2.. Functionally, involved in lipopolysaccharide (LPS) biosynthesis. Translocates lipid A-core from the inner to the outer leaflet of the inner membrane. Transmembrane domains (TMD) form a pore in the inner membrane and the ATP-binding domain (NBD) is responsible for energy generation. The chain is ATP-dependent lipid A-core flippase from Pseudomonas putida (strain ATCC 47054 / DSM 6125 / CFBP 8728 / NCIMB 11950 / KT2440).